A 478-amino-acid polypeptide reads, in one-letter code: DNA gyrase subunit B (478 aa).

In terms of domain architecture, Toprim spans 319-438; sequence CELYLVEGDS…QGYLYVALPP (120 aa). The Mg(2+) site is built by glutamate 325, aspartate 403, and aspartate 405.

Belongs to the type II topoisomerase GyrB family. Heterotetramer, composed of two GyrA and two GyrB chains. In the heterotetramer, GyrA contains the active site tyrosine that forms a transient covalent intermediate with DNA, while GyrB binds cofactors and catalyzes ATP hydrolysis. The cofactor is Mg(2+). Mn(2+) serves as cofactor. Requires Ca(2+) as cofactor.

It is found in the cytoplasm. It carries out the reaction ATP-dependent breakage, passage and rejoining of double-stranded DNA.. In terms of biological role, a type II topoisomerase that negatively supercoils closed circular double-stranded (ds) DNA in an ATP-dependent manner to modulate DNA topology and maintain chromosomes in an underwound state. Negative supercoiling favors strand separation, and DNA replication, transcription, recombination and repair, all of which involve strand separation. Also able to catalyze the interconversion of other topological isomers of dsDNA rings, including catenanes and knotted rings. Type II topoisomerases break and join 2 DNA strands simultaneously in an ATP-dependent manner. This chain is DNA gyrase subunit B (gyrB), found in Eisenibacter elegans (Flexibacter elegans).